We begin with the raw amino-acid sequence, 294 residues long: MAAAVSSVVRRVEELGDLAQAHIQQLSEAAGEDDHFLIRASAALEKLKLLCGEEKECSNPSNLLELYTQAILDMTYFEENKLVDEDFPEDSSSQKVKELISFLSEPEILVKENNMHPKHCNLLGDELLECLSWRRGALLYMYCHSLTKRREWLLRKSSLLKKYLLDGISYLLQMLNYRCPIQLNEGVSFQDLDTAKLLSAGIFSDIHLLAMMYSGEMCYWGSKYCADQQPENHEVDTSVSGAGCTTYKEPLDFREVGEKILKKYVSVCEGPLKEQEWNTTNAKQILNFFHHRCN.

Alanine 2 bears the N-acetylalanine mark.

Belongs to the RIMOC1 family. As to quaternary structure, interacts with the MON1A-CCZ1B complex. Interacts with GDP-bound RAB7A and promotes its interaction with the MON1A-CCZ1B complex.

Its subcellular location is the cytoplasm. It is found in the cytosol. Functionally, plays an important role in the removal of damaged mitochondria via mitophagy by controlling the stability and localization of RAB7A. Required for the recruitment of RAB7A and ATG9A vesicles to damaged mitochondria and promotes the stability of RAB7A by inhibiting its proteasomal degradation during mitophagy. This Homo sapiens (Human) protein is RAB7A-interacting MON1-CCZ1 complex subunit 1.